A 173-amino-acid polypeptide reads, in one-letter code: Large ribosomal subunit protein bL17 (173 aa).

The interval 136–173 (AEEEAPAVEAEATEATEAPVEEAAAVEAEAPADAEKAE) is disordered. Positions 138 to 149 (EEAPAVEAEATE) are enriched in acidic residues. Low complexity predominate over residues 150-166 (ATEAPVEEAAAVEAEAP).

This sequence belongs to the bacterial ribosomal protein bL17 family. In terms of assembly, part of the 50S ribosomal subunit. Contacts protein L32.

This is Large ribosomal subunit protein bL17 from Bifidobacterium longum subsp. infantis (strain ATCC 15697 / DSM 20088 / JCM 1222 / NCTC 11817 / S12).